Consider the following 435-residue polypeptide: Enolase (435 aa).

Q163 contacts (2R)-2-phosphoglycerate. The Proton donor role is filled by E205. Mg(2+) contacts are provided by D243, E292, and D319. K344, R373, S374, and K395 together coordinate (2R)-2-phosphoglycerate. The active-site Proton acceptor is the K344.

It belongs to the enolase family. In terms of assembly, homooctamer, a tetramer of homodimers. Mg(2+) serves as cofactor.

It is found in the cytoplasm. The protein resides in the secreted. It localises to the cell surface. Its subcellular location is the cell wall. The enzyme catalyses (2R)-2-phosphoglycerate = phosphoenolpyruvate + H2O. It participates in carbohydrate degradation; glycolysis; pyruvate from D-glyceraldehyde 3-phosphate: step 4/5. Functionally, catalyzes the reversible conversion of 2-phosphoglycerate (2-PG) into phosphoenolpyruvate (PEP). It is essential for the degradation of carbohydrates via glycolysis. Its function is as follows. 'Moonlights' as a plasminogen receptor. Binds plasminogen and more weakly plasmin when expressed on the bacterial cell surface; probably has more than one plasmin(ogen) binding site, may bind via Lys residues. Plasminogen binding potentially allows the bacterium to acquire surface-associated proteolytic activity, which in turn contributes to tissue invasion and virulence. The polypeptide is Enolase (Streptococcus pyogenes serotype M6 (strain ATCC BAA-946 / MGAS10394)).